The following is a 426-amino-acid chain: Serine hydroxymethyltransferase (426 aa).

Residues L113 and 117 to 119 (GHL) each bind (6S)-5,6,7,8-tetrahydrofolate. The residue at position 222 (K222) is an N6-(pyridoxal phosphate)lysine. 363–365 (SAF) provides a ligand contact to (6S)-5,6,7,8-tetrahydrofolate.

This sequence belongs to the SHMT family. In terms of assembly, homodimer. Requires pyridoxal 5'-phosphate as cofactor.

The protein localises to the cytoplasm. The catalysed reaction is (6R)-5,10-methylene-5,6,7,8-tetrahydrofolate + glycine + H2O = (6S)-5,6,7,8-tetrahydrofolate + L-serine. The protein operates within one-carbon metabolism; tetrahydrofolate interconversion. Its pathway is amino-acid biosynthesis; glycine biosynthesis; glycine from L-serine: step 1/1. Its function is as follows. Catalyzes the reversible interconversion of serine and glycine with tetrahydrofolate (THF) serving as the one-carbon carrier. This reaction serves as the major source of one-carbon groups required for the biosynthesis of purines, thymidylate, methionine, and other important biomolecules. Also exhibits THF-independent aldolase activity toward beta-hydroxyamino acids, producing glycine and aldehydes, via a retro-aldol mechanism. The chain is Serine hydroxymethyltransferase from Bacteroides fragilis (strain ATCC 25285 / DSM 2151 / CCUG 4856 / JCM 11019 / LMG 10263 / NCTC 9343 / Onslow / VPI 2553 / EN-2).